A 219-amino-acid chain; its full sequence is Suppressor-of-stellate-like protein (219 aa).

The tract at residues 194-219 is disordered; the sequence is SAESPPIKVESSVSKSPSWLRNVPNF. Residues 204-219 show a composition bias toward polar residues; the sequence is SSVSKSPSWLRNVPNF.

Belongs to the casein kinase 2 subunit beta family.

This chain is Suppressor-of-stellate-like protein (Ssl), found in Drosophila melanogaster (Fruit fly).